Here is a 154-residue protein sequence, read N- to C-terminus: Transcription antitermination protein NusB (154 aa).

The protein belongs to the NusB family.

Involved in transcription antitermination. Required for transcription of ribosomal RNA (rRNA) genes. Binds specifically to the boxA antiterminator sequence of the ribosomal RNA (rrn) operons. This is Transcription antitermination protein NusB from Methylobacillus flagellatus (strain ATCC 51484 / DSM 6875 / VKM B-1610 / KT).